A 156-amino-acid polypeptide reads, in one-letter code: Small ribosomal subunit protein uS7 (156 aa).

The protein belongs to the universal ribosomal protein uS7 family. In terms of assembly, part of the 30S ribosomal subunit. Contacts proteins S9 and S11.

One of the primary rRNA binding proteins, it binds directly to 16S rRNA where it nucleates assembly of the head domain of the 30S subunit. Is located at the subunit interface close to the decoding center, probably blocks exit of the E-site tRNA. The polypeptide is Small ribosomal subunit protein uS7 (Halalkalibacterium halodurans (strain ATCC BAA-125 / DSM 18197 / FERM 7344 / JCM 9153 / C-125) (Bacillus halodurans)).